The chain runs to 357 residues: Molybdenum import ATP-binding protein ModC (357 aa).

The 233-residue stretch at 1 to 233 folds into the ABC transporter domain; sequence MRLEVEARLR…PFPTSGPGRR (233 aa). 31–38 is an ATP binding site; sequence GRSGSGKT. The region spanning 293 to 357 is the Mop domain; that stretch reads GISALNVLPG…AVVKTVALDY (65 aa).

Belongs to the ABC transporter superfamily. Molybdate importer (TC 3.A.1.8) family. As to quaternary structure, the complex is composed of two ATP-binding proteins (ModC), two transmembrane proteins (ModB) and a solute-binding protein (ModA).

The protein resides in the cell inner membrane. The catalysed reaction is molybdate(out) + ATP + H2O = molybdate(in) + ADP + phosphate + H(+). Its function is as follows. Part of the ABC transporter complex ModABC involved in molybdenum import. Responsible for energy coupling to the transport system. This Rhizobium meliloti (strain 1021) (Ensifer meliloti) protein is Molybdenum import ATP-binding protein ModC.